The sequence spans 272 residues: tRNA pseudouridine synthase A (272 aa).

Asp-52 serves as the catalytic Nucleophile. Tyr-110 lines the substrate pocket.

It belongs to the tRNA pseudouridine synthase TruA family. As to quaternary structure, homodimer.

It catalyses the reaction uridine(38/39/40) in tRNA = pseudouridine(38/39/40) in tRNA. Functionally, formation of pseudouridine at positions 38, 39 and 40 in the anticodon stem and loop of transfer RNAs. This chain is tRNA pseudouridine synthase A, found in Cupriavidus necator (strain ATCC 17699 / DSM 428 / KCTC 22496 / NCIMB 10442 / H16 / Stanier 337) (Ralstonia eutropha).